The primary structure comprises 147 residues: UPF0306 protein YhbP (147 aa).

The protein belongs to the UPF0306 family.

This chain is UPF0306 protein YhbP, found in Shigella sonnei (strain Ss046).